A 206-amino-acid chain; its full sequence is Large ribosomal subunit protein uL4 (206 aa).

Positions 46-77 are disordered; that stretch reads GTRAQKDREQVRHSTKKPFKQKGTGNARAGMT.

It belongs to the universal ribosomal protein uL4 family. Part of the 50S ribosomal subunit.

In terms of biological role, one of the primary rRNA binding proteins, this protein initially binds near the 5'-end of the 23S rRNA. It is important during the early stages of 50S assembly. It makes multiple contacts with different domains of the 23S rRNA in the assembled 50S subunit and ribosome. Forms part of the polypeptide exit tunnel. This Paracidovorax citrulli (strain AAC00-1) (Acidovorax citrulli) protein is Large ribosomal subunit protein uL4.